An 89-amino-acid polypeptide reads, in one-letter code: Small ribosomal subunit protein uS14A (89 aa).

It belongs to the universal ribosomal protein uS14 family. In terms of assembly, part of the 30S ribosomal subunit. Contacts proteins S3 and S10.

Its function is as follows. Binds 16S rRNA, required for the assembly of 30S particles and may also be responsible for determining the conformation of the 16S rRNA at the A site. In Streptococcus equi subsp. zooepidemicus (strain MGCS10565), this protein is Small ribosomal subunit protein uS14A.